Here is a 328-residue protein sequence, read N- to C-terminus: Phosphatidylglycerol--prolipoprotein diacylglyceryl transferase (328 aa).

The next 3 helical transmembrane spans lie at 15–35, 57–77, and 106–126; these read VIQG…ILIS, IFMF…STLV, and GMAI…TINT. Residue arginine 156 participates in a 1,2-diacyl-sn-glycero-3-phospho-(1'-sn-glycerol) binding. The next 2 helical transmembrane spans lie at 242–262 and 289–309; these read GFIF…IEYL and ISMG…WIIV.

It belongs to the Lgt family.

The protein localises to the cell inner membrane. It catalyses the reaction L-cysteinyl-[prolipoprotein] + a 1,2-diacyl-sn-glycero-3-phospho-(1'-sn-glycerol) = an S-1,2-diacyl-sn-glyceryl-L-cysteinyl-[prolipoprotein] + sn-glycerol 1-phosphate + H(+). Its pathway is protein modification; lipoprotein biosynthesis (diacylglyceryl transfer). In terms of biological role, catalyzes the transfer of the diacylglyceryl group from phosphatidylglycerol to the sulfhydryl group of the N-terminal cysteine of a prolipoprotein, the first step in the formation of mature lipoproteins. The sequence is that of Phosphatidylglycerol--prolipoprotein diacylglyceryl transferase from Borreliella burgdorferi (strain ZS7) (Borrelia burgdorferi).